Here is a 352-residue protein sequence, read N- to C-terminus: Holliday junction branch migration complex subunit RuvB (352 aa).

The interval 13 to 201 (FSFRKKELRL…FGISQKIEFY (189 aa)) is large ATPase domain (RuvB-L). Residues Arg-41, Gly-82, Lys-85, Thr-86, Thr-87, 148 to 150 (EDF), Arg-191, Tyr-201, and Arg-238 contribute to the ATP site. A Mg(2+)-binding site is contributed by Thr-86. The interval 202-273 (TCDELKQIIV…LIKKALNSYQ (72 aa)) is small ATPAse domain (RuvB-S). Positions 276 to 352 (EKGLDSLDRH…KYIDSKDDNF (77 aa)) are head domain (RuvB-H). Positions 330 and 335 each coordinate DNA.

This sequence belongs to the RuvB family. Homohexamer. Forms an RuvA(8)-RuvB(12)-Holliday junction (HJ) complex. HJ DNA is sandwiched between 2 RuvA tetramers; dsDNA enters through RuvA and exits via RuvB. An RuvB hexamer assembles on each DNA strand where it exits the tetramer. Each RuvB hexamer is contacted by two RuvA subunits (via domain III) on 2 adjacent RuvB subunits; this complex drives branch migration. In the full resolvosome a probable DNA-RuvA(4)-RuvB(12)-RuvC(2) complex forms which resolves the HJ.

The protein localises to the cytoplasm. The enzyme catalyses ATP + H2O = ADP + phosphate + H(+). Its function is as follows. The RuvA-RuvB-RuvC complex processes Holliday junction (HJ) DNA during genetic recombination and DNA repair, while the RuvA-RuvB complex plays an important role in the rescue of blocked DNA replication forks via replication fork reversal (RFR). RuvA specifically binds to HJ cruciform DNA, conferring on it an open structure. The RuvB hexamer acts as an ATP-dependent pump, pulling dsDNA into and through the RuvAB complex. RuvB forms 2 homohexamers on either side of HJ DNA bound by 1 or 2 RuvA tetramers; 4 subunits per hexamer contact DNA at a time. Coordinated motions by a converter formed by DNA-disengaged RuvB subunits stimulates ATP hydrolysis and nucleotide exchange. Immobilization of the converter enables RuvB to convert the ATP-contained energy into a lever motion, pulling 2 nucleotides of DNA out of the RuvA tetramer per ATP hydrolyzed, thus driving DNA branch migration. The RuvB motors rotate together with the DNA substrate, which together with the progressing nucleotide cycle form the mechanistic basis for DNA recombination by continuous HJ branch migration. Branch migration allows RuvC to scan DNA until it finds its consensus sequence, where it cleaves and resolves cruciform DNA. This chain is Holliday junction branch migration complex subunit RuvB, found in Prochlorococcus marinus (strain AS9601).